We begin with the raw amino-acid sequence, 209 residues long: Large ribosomal subunit protein uL3 (209 aa).

The tract at residues 113 to 155 is disordered; that stretch reads TSRGHGYQGNIKRHHQSRGPETHGSRYHRIPGSMGSIINRVPK.

Belongs to the universal ribosomal protein uL3 family. As to quaternary structure, part of the 50S ribosomal subunit. Forms a cluster with proteins L14 and L19.

One of the primary rRNA binding proteins, it binds directly near the 3'-end of the 23S rRNA, where it nucleates assembly of the 50S subunit. The polypeptide is Large ribosomal subunit protein uL3 (Lactobacillus delbrueckii subsp. bulgaricus (strain ATCC 11842 / DSM 20081 / BCRC 10696 / JCM 1002 / NBRC 13953 / NCIMB 11778 / NCTC 12712 / WDCM 00102 / Lb 14)).